Here is a 246-residue protein sequence, read N- to C-terminus: DNA repair protein RecO (246 aa).

This sequence belongs to the RecO family.

Involved in DNA repair and RecF pathway recombination. The protein is DNA repair protein RecO of Methylorubrum extorquens (strain PA1) (Methylobacterium extorquens).